Here is a 425-residue protein sequence, read N- to C-terminus: Pectate lyase L (425 aa).

Residues 1-25 (MKYLNCFISTGLAAFFLVNSTSVLA) form the signal peptide. An intrachain disulfide couples Cys28 to Cys114. Positions 209, 233, 234, and 237 each coordinate Ca(2+). Residue Lys273 is the Proton acceptor of the active site. Ca(2+)-binding residues include Asn402, Ser413, Ala416, Asp418, and Glu423.

This sequence belongs to the polysaccharide lyase 9 family. Requires Ca(2+) as cofactor.

Its subcellular location is the secreted. It catalyses the reaction Eliminative cleavage of (1-&gt;4)-alpha-D-galacturonan to give oligosaccharides with 4-deoxy-alpha-D-galact-4-enuronosyl groups at their non-reducing ends.. Its pathway is glycan metabolism; pectin degradation; 2-dehydro-3-deoxy-D-gluconate from pectin: step 2/5. In terms of biological role, presents an endo-cleaving activity on polygalacturonate or partially methylated pectin. This is Pectate lyase L (pelL) from Dickeya chrysanthemi (Pectobacterium chrysanthemi).